The chain runs to 884 residues: Protein P (884 aa).

The tract at residues 1-184 (MHPFSRLFRN…GKPYSWEHRQ (184 aa)) is terminal protein domain (TP). Positions 185–387 (LVQHNGQQHK…YCIHHIVSSL (203 aa)) are spacer. Positions 299-345 (RNSGHTTWFSSASNSNKSRSREKAYSSNSTSKRYSPPLNYEKSDFSS) are disordered. The polymerase/reverse transcriptase domain (RT) stretch occupies residues 388 to 729 (DDWGPCTVTG…YEELWPVVRQ (342 aa)). The 242-residue stretch at 398–639 (DVTIKSPRTP…NHLHFMGYVI (242 aa)) folds into the Reverse transcriptase domain. 3 residues coordinate Mg(2+): Asp470, Asp590, and Asp591.

Belongs to the hepadnaviridae P protein family.

It carries out the reaction DNA(n) + a 2'-deoxyribonucleoside 5'-triphosphate = DNA(n+1) + diphosphate. It catalyses the reaction Endonucleolytic cleavage to 5'-phosphomonoester.. With respect to regulation, activated by host HSP70 and HSP40 in vitro to be able to bind the epsilon loop of the pgRNA. Because deletion of the RNase H region renders the protein partly chaperone-independent, the chaperones may be needed indirectly to relieve occlusion of the RNA-binding site by this domain. Inhibited by several reverse-transcriptase inhibitors: Lamivudine, Adefovir and Entecavir. Multifunctional enzyme that converts the viral RNA genome into dsDNA in viral cytoplasmic capsids. This enzyme displays a DNA polymerase activity that can copy either DNA or RNA templates, and a ribonuclease H (RNase H) activity that cleaves the RNA strand of RNA-DNA heteroduplexes in a partially processive 3'- to 5'-endonucleasic mode. Neo-synthesized pregenomic RNA (pgRNA) are encapsidated together with the P protein, and reverse-transcribed inside the nucleocapsid. Initiation of reverse-transcription occurs first by binding the epsilon loop on the pgRNA genome, and is initiated by protein priming, thereby the 5'-end of (-)DNA is covalently linked to P protein. Partial (+)DNA is synthesized from the (-)DNA template and generates the relaxed circular DNA (RC-DNA) genome. After budding and infection, the RC-DNA migrates in the nucleus, and is converted into a plasmid-like covalently closed circular DNA (cccDNA). The activity of P protein does not seem to be necessary for cccDNA generation, and is presumably released from (+)DNA by host nuclear DNA repair machinery. This Marmota monax (Woodchuck) protein is Protein P.